Consider the following 219-residue polypeptide: Probable GTP-binding protein EngB (219 aa).

In terms of domain architecture, EngB-type G spans Val-24–Pro-207. Residues Gly-32–Ser-39, Gly-59–His-63, Asp-81–Gly-84, Thr-148–Asp-151, and Phe-186–Ala-188 each bind GTP. Residues Ser-39 and Thr-61 each coordinate Mg(2+).

This sequence belongs to the TRAFAC class TrmE-Era-EngA-EngB-Septin-like GTPase superfamily. EngB GTPase family. Mg(2+) is required as a cofactor.

In terms of biological role, necessary for normal cell division and for the maintenance of normal septation. This Burkholderia ambifaria (strain ATCC BAA-244 / DSM 16087 / CCUG 44356 / LMG 19182 / AMMD) (Burkholderia cepacia (strain AMMD)) protein is Probable GTP-binding protein EngB.